The sequence spans 365 residues: Protein dbl-1 (365 aa).

Residues 1–42 (MNDSVRTTTTISSTKSLVHSFQLSAILHLFLLISFTPMSAAA) form the signal peptide. Positions 43 to 244 (DQHASHATRR…KRSAQTGNSE (202 aa)) are excised as a propeptide. N-linked (GlcNAc...) asparagine glycans are attached at residues N110, N143, and N167. Residues 231–259 (SVRRKRSAQTGNSERKNRKKGRKHHNTEA) form a disordered region. Positions 246–255 (KNRKKGRKHH) are enriched in basic residues. Intrachain disulfides connect C264-C330, C293-C362, and C297-C364. The N-linked (GlcNAc...) asparagine glycan is linked to N306.

Belongs to the TGF-beta family. As to quaternary structure, homodimer; disulfide-linked. Interacts with drag-1. Expressed in embryos just prior to hatching and remains constant in most cells throughout the larval and adult stages. Expressed by AVA command interneurons.

It localises to the secreted. In terms of biological role, ligand for the serine/threonine-protein kinase receptor type-1 sma-6 which activates a TGF-beta-like signaling pathway. Multifunctional protein that is involved in body size, male ectodermal patterning, innate immunity, lipid metabolism and neural plasticity. Dose-dependent regulator of body size, probably influencing the sizes of some or all cells rather than their number. Plays a role in patterning of male-specific genital sensilla (simple sense organs), known as rays, and mating-associated structures, spicules. Plays a protective role in response to infection by the Gram-negative bacterium S.marcescens, by activating expression of genes involved in innate immunity. Regulator of lipid homeostasis, acting non cell-autonomously in the hypodermis; partly dependent on the Insulin/IGF-1-like signaling (IIS) mediated pathway. Required for aversive olfactory learning of pathogenic bacteria in adults. Involved in gland cell morphology, possibly via activation of a Smad-independent TGF-beta signaling pathway. Required to oppose the autoregulation of expression of Runt-related transcription factor rnt-1. This Caenorhabditis elegans protein is Protein dbl-1.